Reading from the N-terminus, the 488-residue chain is Probable G-protein coupled receptor Mth-like 12 (488 aa).

Positions 1–17 are cleaved as a signal peptide; the sequence is MFLWLKCFCTLIIVTIA. Topologically, residues 18–215 are extracellular; sequence KNSSAKIPHC…NRRCYRNVMP (198 aa). N-linked (GlcNAc...) asparagine glycans are attached at residues Asn-19, Asn-34, and Asn-55. 5 disulfides stabilise this stretch: Cys-27-Cys-81, Cys-83-Cys-88, Cys-92-Cys-189, Cys-93-Cys-104, and Cys-155-Cys-209. Asn-141 carries N-linked (GlcNAc...) asparagine glycosylation. A helical transmembrane segment spans residues 216–236; sequence GIAQLSVISVVGFILTLAVYL. The Cytoplasmic portion of the chain corresponds to 237-247; that stretch reads SVEKLRNLLGK. Residues 248–268 form a helical membrane-spanning segment; sequence CLICSLFSMFMEYFIWTMDYF. The Extracellular portion of the chain corresponds to 269–283; it reads RLLQSICSAAGYMKY. Residues 284-304 form a helical membrane-spanning segment; that stretch reads FFSMSSYLWFSVVSFHLWELF. Residues 305–315 lie on the Cytoplasmic side of the membrane; sequence TSLNRHEPQYR. A helical transmembrane segment spans residues 316–336; sequence FLIYNTFVWCTAAIPTVVIFS. At 337 to 373 the chain is on the extracellular side; sequence MNQMWENDPGKSEWLPLVGYFGCSVKDWNSSSWFYSH. Residue Asn-365 is glycosylated (N-linked (GlcNAc...) asparagine). The chain crosses the membrane as a helical span at residues 374-394; it reads IPIVILNSFNVIMFVLTAIYI. Residues 395-416 are Cytoplasmic-facing; sequence WKVKKGVKSFAQHDERNTTCLE. Residues 417-437 traverse the membrane as a helical segment; sequence FNVQTYIQFVRLFLIMGASWL. The Extracellular segment spans residues 438-454; it reads LDQLTRLAEDSHLLLDT. A helical transmembrane segment spans residues 455–475; it reads IVLNLTVYLNAAFGILIFVLL. Topologically, residues 476 to 488 are cytoplasmic; it reads ILKGSTFKMIMER.

It belongs to the G-protein coupled receptor 2 family. Mth subfamily.

Its subcellular location is the cell membrane. The protein is Probable G-protein coupled receptor Mth-like 12 (mthl12) of Drosophila melanogaster (Fruit fly).